Here is an 87-residue protein sequence, read N- to C-terminus: uncharacterized protein (87 aa).

It belongs to the YlmC/YmxH family.

This is an uncharacterized protein from Clostridium acetobutylicum (strain ATCC 824 / DSM 792 / JCM 1419 / IAM 19013 / LMG 5710 / NBRC 13948 / NRRL B-527 / VKM B-1787 / 2291 / W).